The chain runs to 440 residues: C-terminal-binding protein 1 (440 aa).

NAD(+) contacts are provided by residues serine 100, 180 to 185 (IGLGRV), aspartate 204, 237 to 243 (CGLNEHN), 264 to 266 (TAR), and aspartate 290. Arginine 266 is an active-site residue. The active site involves glutamate 295. Residue histidine 315 is the Proton donor of the active site. NAD(+) is bound at residue 315 to 318 (HAAW). The disordered stretch occupies residues 409–440 (HAHPAVAHPPHAPSPGQTIKPEADRDHPSDQL). Over residues 429–440 (PEADRDHPSDQL) the composition is skewed to basic and acidic residues.

This sequence belongs to the D-isomer specific 2-hydroxyacid dehydrogenase family. NAD(+) is required as a cofactor.

The protein resides in the nucleus. Corepressor targeting diverse transcription regulators. Has dehydrogenase activity. The sequence is that of C-terminal-binding protein 1 (ctbp1) from Xenopus laevis (African clawed frog).